A 58-amino-acid chain; its full sequence is Conotoxin Leo-T2 (58 aa).

The signal sequence occupies residues 1-22; the sequence is MRCLPVFIILPLLIPSAPSVDA. Positions 23–47 are excised as a propeptide; sequence QPMTEDDVPLASFHEQTLQELWNKR.

The protein belongs to the conotoxin T superfamily. In terms of processing, contains 2 disulfide bonds that can be either 'C1-C3, C2-C4' or 'C1-C4, C2-C3', since these disulfide connectivities have been observed for conotoxins with cysteine framework V (for examples, see AC P0DQQ7 and AC P81755). Expressed by the venom duct.

It is found in the secreted. In Conus leopardus (Leopard cone), this protein is Conotoxin Leo-T2.